The primary structure comprises 91 residues: Elongation factor 1-beta (91 aa).

Belongs to the EF-1-beta/EF-1-delta family.

Its function is as follows. Promotes the exchange of GDP for GTP in EF-1-alpha/GDP, thus allowing the regeneration of EF-1-alpha/GTP that could then be used to form the ternary complex EF-1-alpha/GTP/AAtRNA. This Pyrococcus horikoshii (strain ATCC 700860 / DSM 12428 / JCM 9974 / NBRC 100139 / OT-3) protein is Elongation factor 1-beta (ef1b).